The following is a 688-amino-acid chain: Amino-acid acetyltransferase, mitochondrial (688 aa).

The transit peptide at 1–45 (MSSRALTWPRTAKSSLLKQQTSSFVGQPKLGTPNCRSFSSTADRP) directs the protein to the mitochondrion. 2 disordered regions span residues 1-59 (MSSR…SKSY) and 96-119 (LKAQ…TVTQ). Polar residues-rich tracts occupy residues 12–25 (AKSS…SSFV), 34–57 (NCRS…SSSK), and 106–119 (TEPT…TVTQ). Residues 509–678 (NRPRLSLDDP…YEQVCRSIQP (170 aa)) enclose the N-acetyltransferase domain.

The protein belongs to the acetyltransferase family.

Its subcellular location is the mitochondrion. The catalysed reaction is L-glutamate + acetyl-CoA = N-acetyl-L-glutamate + CoA + H(+). It functions in the pathway amino-acid biosynthesis; L-arginine biosynthesis; N(2)-acetyl-L-ornithine from L-glutamate: step 1/4. Functionally, N-acetylglutamate synthase involved in arginine biosynthesis. This is Amino-acid acetyltransferase, mitochondrial (arg2) from Aspergillus flavus (strain ATCC 200026 / FGSC A1120 / IAM 13836 / NRRL 3357 / JCM 12722 / SRRC 167).